A 430-amino-acid polypeptide reads, in one-letter code: 3-phosphoshikimate 1-carboxyvinyltransferase (430 aa).

3-phosphoshikimate is bound by residues Lys-20, Ser-21, and Arg-25. Lys-20 provides a ligand contact to phosphoenolpyruvate. Phosphoenolpyruvate is bound by residues Gly-92 and Arg-120. Residues Ser-166, Gln-168, Asp-312, and Lys-339 each coordinate 3-phosphoshikimate. Gln-168 contributes to the phosphoenolpyruvate binding site. Residue Asp-312 is the Proton acceptor of the active site. The phosphoenolpyruvate site is built by Arg-343 and Arg-387.

This sequence belongs to the EPSP synthase family. In terms of assembly, monomer.

The protein resides in the cytoplasm. The enzyme catalyses 3-phosphoshikimate + phosphoenolpyruvate = 5-O-(1-carboxyvinyl)-3-phosphoshikimate + phosphate. It participates in metabolic intermediate biosynthesis; chorismate biosynthesis; chorismate from D-erythrose 4-phosphate and phosphoenolpyruvate: step 6/7. Its function is as follows. Catalyzes the transfer of the enolpyruvyl moiety of phosphoenolpyruvate (PEP) to the 5-hydroxyl of shikimate-3-phosphate (S3P) to produce enolpyruvyl shikimate-3-phosphate and inorganic phosphate. The protein is 3-phosphoshikimate 1-carboxyvinyltransferase of Lactococcus lactis subsp. lactis (strain IL1403) (Streptococcus lactis).